We begin with the raw amino-acid sequence, 485 residues long: Ribulose bisphosphate carboxylase large chain (485 aa).

Substrate is bound by residues Asn-124 and Thr-174. Lys-176 serves as the catalytic Proton acceptor. Lys-178 lines the substrate pocket. 3 residues coordinate Mg(2+): Lys-202, Asp-204, and Glu-205. Lys-202 carries the post-translational modification N6-carboxylysine. His-294 (proton acceptor) is an active-site residue. Residues Arg-295, His-327, and Ser-379 each contribute to the substrate site.

This sequence belongs to the RuBisCO large chain family. Type I subfamily. As to quaternary structure, heterohexadecamer of 8 large chains and 8 small chains. The cofactor is Mg(2+).

It carries out the reaction 2 (2R)-3-phosphoglycerate + 2 H(+) = D-ribulose 1,5-bisphosphate + CO2 + H2O. It catalyses the reaction D-ribulose 1,5-bisphosphate + O2 = 2-phosphoglycolate + (2R)-3-phosphoglycerate + 2 H(+). In terms of biological role, ruBisCO catalyzes two reactions: the carboxylation of D-ribulose 1,5-bisphosphate, the primary event in carbon dioxide fixation, as well as the oxidative fragmentation of the pentose substrate. Both reactions occur simultaneously and in competition at the same active site. This chain is Ribulose bisphosphate carboxylase large chain, found in Rhodopseudomonas palustris (strain BisA53).